The primary structure comprises 369 residues: Iron-sulfur cluster carrier protein (369 aa).

115–122 (GKGGVGKS) is an ATP binding site.

It belongs to the Mrp/NBP35 ATP-binding proteins family. Homodimer. Holo-ApbC forms a mixture of homodimers and homotetramers.

Binds and transfers iron-sulfur (Fe-S) clusters to target apoproteins. Can hydrolyze ATP. Both activities are required for function in vivo, but the ability to hydrolyze ATP is not necessary for Fe-S cluster transfer. The polypeptide is Iron-sulfur cluster carrier protein (Salmonella typhimurium (strain LT2 / SGSC1412 / ATCC 700720)).